We begin with the raw amino-acid sequence, 127 residues long: Pleckstrin homology-like domain family A member 3 (127 aa).

Residues 5–108 (KVMNDGYLEK…RFKNRVAVQT (104 aa)) enclose the PH domain.

It belongs to the PHLDA3 family.

The protein localises to the cytoplasm. It is found in the membrane. Its function is as follows. p53/tp53-regulated repressor of Akt/akt1 signaling. Represses akt1 by preventing akt1-binding to membrane lipids, thereby inhibiting akt1 translocation to the cellular membrane and activation. Contributes to p53/tp53-dependent apoptosis by repressing akt1 activity. Its direct transcription regulation by p53/tp53 may explain how p53/tp53 can negatively regulate akt1. May act as a tumor suppressor. The protein is Pleckstrin homology-like domain family A member 3 (phlda3) of Danio rerio (Zebrafish).